Reading from the N-terminus, the 387-residue chain is MGEAPAVLVDHPENGHSNGVCVKSEPENTEITVDVGDRIFLIGGTHERNNFSIGVQIYDKISNNWFSPIVLGTGPKPSKGYSAFVLEQGRILVIKKGSPRNDSIWFLEVDSPYVREQKKLLRKEVVAWSKGVRGNAEKPIVISGPSGVGKGTLISMLMKEFPSMFGFSVSHTTRSPRSMEMDGVHYHFADKKVMEKEIKDGKFLEFASVHGNLYGTSIESVEAVTDSGKRCILDIDVQGARSVRASSLDAIFIFVCPPSMKELEDRLRARGTETEEQIQKRLRNAEAEIKEGISSGIFGLILYNDNLEECYKKLKNLLGLDGLAHVNGVEIEGINLPIEYAVSKMEDKIIIQETGKETRNKIVVDISSLNGGAPGRTRGILVDAIKF.

The Guanylate kinase-like domain maps to 137-319 (EKPIVISGPS…CYKKLKNLLG (183 aa)). Residue 144–151 (GPSGVGKG) participates in ATP binding. Active-site residues include Arg177, Arg270, and Arg281. ATP is bound by residues Asn304 and Asp305.

It belongs to the guanylate kinase family. As to quaternary structure, monomer.

It catalyses the reaction GMP + ATP = GDP + ADP. Functionally, essential for recycling GMP and indirectly, cGMP. Required for normal development of the gametophyte and embryo, in association with GK2. This is Guanylate kinase 1 (GK-1) from Arabidopsis thaliana (Mouse-ear cress).